The sequence spans 214 residues: Large ribosomal subunit protein uL3 (214 aa).

Gln151 carries the post-translational modification N5-methylglutamine.

The protein belongs to the universal ribosomal protein uL3 family. In terms of assembly, part of the 50S ribosomal subunit. Forms a cluster with proteins L14 and L19. Methylated by PrmB.

One of the primary rRNA binding proteins, it binds directly near the 3'-end of the 23S rRNA, where it nucleates assembly of the 50S subunit. In Magnetococcus marinus (strain ATCC BAA-1437 / JCM 17883 / MC-1), this protein is Large ribosomal subunit protein uL3.